A 102-amino-acid polypeptide reads, in one-letter code: Large ribosomal subunit protein bL21 (102 aa).

This sequence belongs to the bacterial ribosomal protein bL21 family. As to quaternary structure, part of the 50S ribosomal subunit. Contacts protein L20.

Functionally, this protein binds to 23S rRNA in the presence of protein L20. This chain is Large ribosomal subunit protein bL21, found in Oceanobacillus iheyensis (strain DSM 14371 / CIP 107618 / JCM 11309 / KCTC 3954 / HTE831).